A 356-amino-acid polypeptide reads, in one-letter code: Carbohydrate sulfotransferase 10 (356 aa).

Topologically, residues 1-6 (MHHQWL) are cytoplasmic. Residues 7-27 (LLAACFWVIFMFMVASKFITL) traverse the membrane as a helical; Signal-anchor for type II membrane protein segment. Topologically, residues 28-356 (TFKDPDVYSA…GYQKPDFLLN (329 aa)) are lumenal. The N-linked (GlcNAc...) asparagine glycan is linked to Asn-99. 3'-phosphoadenylyl sulfate contacts are provided by residues 127–133 (PKVGNTQ) and 189–197 (RDPFERLIS). Asn-228 and Asn-316 each carry an N-linked (GlcNAc...) asparagine glycan.

It belongs to the sulfotransferase 2 family. In terms of tissue distribution, in fetal tissues, it is predominantly expressed in brain, and weakly expressed in lung, kidney and liver. In adult, it is highly expressed in brain, testis, ovary, expressed at intermediate level in heart, pancreas, skeletal muscle, spleen and thymus, and weakly expressed in other tissues. In brain, it is expressed at higher level in the frontal lobe.

The protein resides in the golgi apparatus membrane. It catalyses the reaction 3-O-{beta-D-GlcA-(1-&gt;[3)-alpha-D-Xyl-(1-&gt;3)-beta-D-GlcA-(1-&gt;](n)-4)-beta-D-Xyl-(1-&gt;4)-Rib-ol-P-Rib-ol-P-3-beta-D-GalNAc-(1-&gt;3)-beta-D-GlcNAc-(1-&gt;4)-O-6-P-alpha-D-Man}-L-Thr-[protein] + 3'-phosphoadenylyl sulfate = 3-O-{O-3-S-beta-D-GlcA-(1-&gt;[3)-alpha-D-Xyl-(1-&gt;3)-beta-D-GlcA-(1-&gt;](n)-4)-beta-D-Xyl-(1-&gt;4)-Rib-ol-P-Rib-ol-P-3-beta-D-GalNAc-(1-&gt;3)-beta-D-GlcNAc-(1-&gt;4)-O-6-P-alpha-D-Man}-L-Thr-[protein] + adenosine 3',5'-bisphosphate + H(+). It carries out the reaction 17beta-estradiol 3-O-(beta-D-glucuronate) + 3'-phosphoadenylyl sulfate = 17beta-estradiol 3-O-(3-sulfo-beta-D-glucuronate) + adenosine 3',5'-bisphosphate + H(+). The enzyme catalyses 17beta-estradiol 3-O-(beta-D-glucuronate) 17-sulfate + 3'-phosphoadenylyl sulfate = 17beta-estradiol 3-O-(3-sulfo-beta-D-glucuronate) 17-sulfate + adenosine 3',5'-bisphosphate + H(+). The catalysed reaction is 17beta-estradiol 17-O-(beta-D-glucuronate) + 3'-phosphoadenylyl sulfate = 17beta-estradiol 17-O-(3-sulfo-beta-D-glucuronate) + adenosine 3',5'-bisphosphate + H(+). It catalyses the reaction 16alpha,17beta-estriol 3-O-(beta-D-glucuronate) + 3'-phosphoadenylyl sulfate = 16alpha,17beta-estriol 3-O-(3-sulfo-beta-D-glucuronate) + adenosine 3',5'-bisphosphate + H(+). It carries out the reaction 16alpha,17beta-estriol 16-O-(beta-D-glucuronate) + 3'-phosphoadenylyl sulfate = 16alpha,17beta-estriol 16-O-(3-sulfo-beta-D-glucuronate) + adenosine 3',5'-bisphosphate + H(+). The enzyme catalyses 16alpha,17beta-estriol 17-O-(beta-D-glucuronate) + 3'-phosphoadenylyl sulfate = 16alpha,17beta-estriol 17-O-(3-sulfo-beta-D-glucuronate) + adenosine 3',5'-bisphosphate + H(+). The catalysed reaction is estrone 3-O-(beta-D-glucuronate) + 3'-phosphoadenylyl sulfate = estrone 3-O-(3-sulfo-beta-D-glucuronate) + adenosine 3',5'-bisphosphate + H(+). It catalyses the reaction 3alpha,20alpha-dihydroxy-5beta-pregnane 3-O-(beta-D-glucuronate) + 3'-phosphoadenylyl sulfate = 3alpha,20alpha-dihydroxy-5beta-pregnane 3-O-(3-sulfo-beta-D-glucuronate) + adenosine 3',5'-bisphosphate + H(+). It carries out the reaction testosterone 17-O-(beta-D-glucuronate) + 3'-phosphoadenylyl sulfate = testosterone 17-O-(3-sulfo-beta-D-glucuronate) + adenosine 3',5'-bisphosphate + H(+). The enzyme catalyses 3beta-androst-5-en-17-one 3-O-(beta-D-glucuronate) + 3'-phosphoadenylyl sulfate = 3beta-androst-5-en-17-one 3-O-(3-sulfo-beta-D-glucuronate) + adenosine 3',5'-bisphosphate + H(+). The catalysed reaction is 3alpha,17alpha-dihydroxy-5beta-androstane-11-one-17beta-carboxylate 3-O-(beta-D-glucuronate) + 3'-phosphoadenylyl sulfate = 3alpha,17alpha-dihydroxy-5beta-androstane-11-one-17beta-carboxylate 3-O-(3-sulfo-beta-D-glucuronate) + adenosine 3',5'-bisphosphate + H(+). It catalyses the reaction 3alpha-hydroxyetiocholan-17-one 3-O-(beta-D-glucuronate) + 3'-phosphoadenylyl sulfate = 3alpha-hydroxyetiocholan-17-one 3-O-(3-sulfo-beta-D-glucuronate) + adenosine 3',5'-bisphosphate + H(+). It participates in steroid metabolism. Its pathway is protein modification; carbohydrate sulfation. In terms of biological role, catalyzes the transfer of sulfate from 3'-phosphoadenylyl sulfate (PAPS) to position 3 of terminal glucuronic acid of both protein- and lipid-linked oligosaccharides. Participates in biosynthesis of HNK-1 carbohydrate structure 3-O-sulfo-beta-D-GlcA-(1-&gt;3)-beta-D-Gal-(1-&gt;4)-D-GlcNAc-R, a sulfated glucuronyl-lactosaminyl residue carried by many neural recognition molecules, which is involved in cell interactions during ontogenetic development and in synaptic plasticity in the adult. May be indirectly involved in synapse plasticity of the hippocampus, via its role in HNK-1 biosynthesis. Sulfates terminal glucuronyl residue of the laminin globular (LG)-domain binding epitope on DAG1/alpha-dystroglycan and prevents further polymerization by LARGE1 glycosyltransferase. Likely defines the chain length of LG epitope, conferring binding specificity to extracellular matrix components. Plays a role in down-regulating the steroid hormones. Sulfates glucuronidated estrogens and androgens with an impact in hormone cycle and fertility. Has a preference for glucuronyl moiety at the 3-hydroxyl group of a sterol ring rather than the 17-hydroxyl group, showing high catalytic efficiency for 17beta-estradiol 3-O-(beta-D-glucuronate) and dehydroepiandrosterone 3-O-(beta-D-glucuronate) hormones. The protein is Carbohydrate sulfotransferase 10 of Homo sapiens (Human).